The sequence spans 163 residues: UPF0763 protein CJJ81176_1011 (163 aa).

The protein belongs to the UPF0763 family.

In Campylobacter jejuni subsp. jejuni serotype O:23/36 (strain 81-176), this protein is UPF0763 protein CJJ81176_1011.